The sequence spans 170 residues: Lipoprotein signal peptidase (170 aa).

A run of 5 helical transmembrane segments spans residues 13–33 (IFIS…VTYV), 72–92 (LFFL…SLKE), 96–113 (VSRF…GNII), 116–136 (LFRP…IFGL), and 142–162 (FNFA…YDLF). Catalysis depends on residues aspartate 124 and aspartate 146.

Belongs to the peptidase A8 family.

Its subcellular location is the cell inner membrane. It catalyses the reaction Release of signal peptides from bacterial membrane prolipoproteins. Hydrolyzes -Xaa-Yaa-Zaa-|-(S,diacylglyceryl)Cys-, in which Xaa is hydrophobic (preferably Leu), and Yaa (Ala or Ser) and Zaa (Gly or Ala) have small, neutral side chains.. It functions in the pathway protein modification; lipoprotein biosynthesis (signal peptide cleavage). Its function is as follows. This protein specifically catalyzes the removal of signal peptides from prolipoproteins. The protein is Lipoprotein signal peptidase of Borrelia duttonii (strain Ly).